Consider the following 419-residue polypeptide: 3-oxo-isoapionate-4-phosphate decarboxylase (419 aa).

Residues Lys179, Asp181, and Glu182 each coordinate Mg(2+). Lys179 bears the N6-carboxylysine mark.

The protein belongs to the RuBisCO large chain family. Mg(2+) serves as cofactor.

It carries out the reaction 3-oxoisoapionate 4-phosphate + H(+) = L-erythrulose 1-phosphate + CO2. Its pathway is carbohydrate metabolism. Its function is as follows. Involved in catabolism of D-apiose. Catalyzes the decarboxylation of 3-oxo-isoapionate 4-phosphate to L-erythrulose 1-phosphate. This Rhizobium rhizogenes (strain K84 / ATCC BAA-868) (Agrobacterium radiobacter) protein is 3-oxo-isoapionate-4-phosphate decarboxylase.